The following is a 290-amino-acid chain: Pyridoxal 5'-phosphate synthase subunit PdxS (290 aa).

Asp-22 is a D-ribose 5-phosphate binding site. Lys-79 serves as the catalytic Schiff-base intermediate with D-ribose 5-phosphate. Gly-151 contributes to the D-ribose 5-phosphate binding site. Arg-163 is a binding site for D-glyceraldehyde 3-phosphate. Residues Gly-212 and 233 to 234 (GS) contribute to the D-ribose 5-phosphate site.

This sequence belongs to the PdxS/SNZ family. In the presence of PdxT, forms a dodecamer of heterodimers.

The catalysed reaction is aldehydo-D-ribose 5-phosphate + D-glyceraldehyde 3-phosphate + L-glutamine = pyridoxal 5'-phosphate + L-glutamate + phosphate + 3 H2O + H(+). The protein operates within cofactor biosynthesis; pyridoxal 5'-phosphate biosynthesis. In terms of biological role, catalyzes the formation of pyridoxal 5'-phosphate from ribose 5-phosphate (RBP), glyceraldehyde 3-phosphate (G3P) and ammonia. The ammonia is provided by the PdxT subunit. Can also use ribulose 5-phosphate and dihydroxyacetone phosphate as substrates, resulting from enzyme-catalyzed isomerization of RBP and G3P, respectively. This chain is Pyridoxal 5'-phosphate synthase subunit PdxS, found in Clostridium botulinum (strain Langeland / NCTC 10281 / Type F).